The following is a 195-amino-acid chain: CD70 antigen (195 aa).

The Cytoplasmic segment spans residues 1 to 23 (MPEEGRPCPWVRWSGTAFQRQWP). Residues 24–44 (WLLLVVFITVFCCWFHCSGLL) traverse the membrane as a helical; Signal-anchor for type II membrane protein segment. The Extracellular segment spans residues 45 to 195 (SKQQQRLLEH…TFFGVQWICP (151 aa)). A THD domain is found at 58 to 193 (HTAELQLNLT…DETFFGVQWI (136 aa)). 2 N-linked (GlcNAc...) asparagine glycosylation sites follow: Asn65 and Asn116. Intrachain disulfides connect Cys117/Cys153 and Cys135/Cys170. A glycan (N-linked (GlcNAc...) asparagine) is linked at Asn172.

This sequence belongs to the tumor necrosis factor family. Homotrimer. N-glycosylated. Very low level of expression. Detected in splenocytes and thymocytes.

The protein localises to the cell membrane. Functionally, expressed at the plasma membrane of B cells, it is the ligand of the CD27 receptor which is specifically expressed at the surface of T cells. The CD70-CD27 signaling pathway mediates antigen-specific T cell activation and expansion which in turn provides immune surveillance of B cells. This is CD70 antigen from Mus musculus (Mouse).